The primary structure comprises 294 residues: MVKIEKKLHKPLWLKIKLPSSDYKIKVIKKTMNKSSLYTICEEACCPNLAECFNNGTATFMILGNICTRRCPFCNVAHGRPLIPDIHEPEKLAETITNMGLRYVVITSVNRDDLYDGGAQHFVDCIRAIRAKNSATRIEVLVPDFRGHMKTALEILNTSPPDVFNHNIENVPRLYRHIRPGADYHRSLKLLKKFKEYNPSLPTKSGLMMGLGETREEIIEVMRDLRQHNVTMLTLGQYLQPSSNHLPVQRYITPQEFNEMKLESLAMGFTYAACGPFVRSSYHADLQNKGIEVK.

[4Fe-4S] cluster-binding residues include Cys41, Cys46, Cys52, Cys67, Cys71, Cys74, and Ser281. Residues 53 to 270 (FNNGTATFMI…KLESLAMGFT (218 aa)) enclose the Radical SAM core domain.

The protein belongs to the radical SAM superfamily. Lipoyl synthase family. Requires [4Fe-4S] cluster as cofactor.

It localises to the cytoplasm. It carries out the reaction [[Fe-S] cluster scaffold protein carrying a second [4Fe-4S](2+) cluster] + N(6)-octanoyl-L-lysyl-[protein] + 2 oxidized [2Fe-2S]-[ferredoxin] + 2 S-adenosyl-L-methionine + 4 H(+) = [[Fe-S] cluster scaffold protein] + N(6)-[(R)-dihydrolipoyl]-L-lysyl-[protein] + 4 Fe(3+) + 2 hydrogen sulfide + 2 5'-deoxyadenosine + 2 L-methionine + 2 reduced [2Fe-2S]-[ferredoxin]. The protein operates within protein modification; protein lipoylation via endogenous pathway; protein N(6)-(lipoyl)lysine from octanoyl-[acyl-carrier-protein]: step 2/2. Its function is as follows. Catalyzes the radical-mediated insertion of two sulfur atoms into the C-6 and C-8 positions of the octanoyl moiety bound to the lipoyl domains of lipoate-dependent enzymes, thereby converting the octanoylated domains into lipoylated derivatives. The chain is Lipoyl synthase from Baumannia cicadellinicola subsp. Homalodisca coagulata.